Reading from the N-terminus, the 240-residue chain is Cytochrome c-551 (240 aa).

6 residues coordinate heme c: cysteine 41, cysteine 44, histidine 45, cysteine 128, cysteine 132, and histidine 133.

In terms of processing, binds 2 heme c groups per subunit.

This chain is Cytochrome c-551, found in Rhodocyclus tenuis (Rhodospirillum tenue).